The chain runs to 162 residues: NADH-quinone oxidoreductase subunit I (162 aa).

4Fe-4S ferredoxin-type domains lie at 52–82 (LRRY…IEAG) and 93–122 (TRYD…EGPN). [4Fe-4S] cluster is bound by residues Cys-62, Cys-65, Cys-68, Cys-72, Cys-102, Cys-105, Cys-108, and Cys-112.

The protein belongs to the complex I 23 kDa subunit family. NDH-1 is composed of 14 different subunits. Subunits NuoA, H, J, K, L, M, N constitute the membrane sector of the complex. It depends on [4Fe-4S] cluster as a cofactor.

The protein resides in the cell inner membrane. The enzyme catalyses a quinone + NADH + 5 H(+)(in) = a quinol + NAD(+) + 4 H(+)(out). In terms of biological role, NDH-1 shuttles electrons from NADH, via FMN and iron-sulfur (Fe-S) centers, to quinones in the respiratory chain. The immediate electron acceptor for the enzyme in this species is believed to be ubiquinone. Couples the redox reaction to proton translocation (for every two electrons transferred, four hydrogen ions are translocated across the cytoplasmic membrane), and thus conserves the redox energy in a proton gradient. The polypeptide is NADH-quinone oxidoreductase subunit I (Methylobacterium sp. (strain 4-46)).